Here is a 288-residue protein sequence, read N- to C-terminus: MSQVDNRNSSAAKRARTDGGRREDDWICPSCGNVNFSFRTTCNMRNCTQPRPADHNGKSAPKPMQHQQGFSSPGAYLGSGGPPPVYMGGSPYGSPLFNGSSMPPYDVPFSGGSPYHFNYNSRMPAGAHYRPLHMSGPPPYHGGSMMGSGGMYGMPPPIDRYGLGMAMGPGSAAAMMPRPRFYPDEKSQKRDSTRDNDWTCPNCGNVNFSFRTVCNMRKCNTPKPGSQQGGSSDKISKQNAPEGSWKCDNCGNINYPFRSKCNRQNCGADKPGDRSNGSPSRAPEENDQ.

Over residues Met1 to Ala11 the composition is skewed to polar residues. 5 disordered regions span residues Met1–Asp24, Pro52–Leu77, Met176–Trp198, Pro222–Asp248, and Asn265–Gln288. The span at Ala15–Asp24 shows a compositional bias: basic and acidic residues. 3 consecutive RanBP2-type zinc fingers follow at residues Arg22 to Ala53, Arg194 to Gly225, and Pro241 to Gly272. Residues Phe181–Asp197 are compositionally biased toward basic and acidic residues. Residues Lys223–Pro241 show a composition bias toward polar residues. At Ser278 the chain carries Phosphoserine.

This is RanBP2-type zinc finger protein At1g67325 from Arabidopsis thaliana (Mouse-ear cress).